A 590-amino-acid chain; its full sequence is uncharacterized protein (590 aa).

2 disordered regions span residues 306 to 329 (IAEP…GIPY) and 528 to 590 (QPAP…LMNL). Residues 543 to 563 (PSLPQPVPEPLAPQEPPPPGT) show a composition bias toward pro residues.

This is an uncharacterized protein from Ictaluridae (bullhead catfishes).